The chain runs to 65 residues: MIKKKSHSGLKKRIKITKKKKLLRGHAYKNHLAASKTTKQNRQLRGVVCVDHSDYKRIKTLIRGL.

The protein belongs to the bacterial ribosomal protein bL35 family.

This chain is Large ribosomal subunit protein bL35, found in Phytoplasma australiense.